The primary structure comprises 468 residues: Glucose transport protein (468 aa).

Residues 1–17 (MNPSSSPSQSTANVKFV) are Cytoplasmic-facing. Residues 18–38 (LLISGVAALGGFLFGFDTAVI) form a helical membrane-spanning segment. Residues 39–58 (NGAVAALQKHFQTDSLLTGL) are Extracellular-facing. The chain crosses the membrane as a helical span at residues 59–78 (SVSLALLGSALGAFGAGPIA). At 79–84 (DRHGRI) the chain is on the cytoplasmic side. A helical transmembrane segment spans residues 85-105 (KTMILAAVLFTLSSIGSGLPF). Residues 106-114 (TIWDFIFWR) are Extracellular-facing. The chain crosses the membrane as a helical span at residues 115 to 135 (VLGGIGVGAASVIAPAYIAEV). Residues 136 to 149 (SPAHLRGRLGSLQQ) lie on the Cytoplasmic side of the membrane. Residues 150–170 (LAIVSGIFIALLSNWFIALMA) traverse the membrane as a helical segment. Topologically, residues 171-186 (GGSAQNPWLFGAAAWR) are extracellular. Residues 187–207 (WMFWTELIPALLYGVCAFLIP) traverse the membrane as a helical segment. The Cytoplasmic segment spans residues 208-265 (ESPRYLVAQGQGEKAAAILWKVEGGDVPSRIEEIQATVSLDHKPRFSDLLSRRGGLLP). Residues 266 to 286 (IVWIGMGLSALQQFVGINVIF) traverse the membrane as a helical segment. Residues 287–307 (YYSSVLWRSVGFTEEKSLLIT) are Extracellular-facing. The chain crosses the membrane as a helical span at residues 308–328 (VITGFINILTTLVAIAFVDKF). Topologically, residues 329–331 (GRK) are cytoplasmic. The helical transmembrane segment at 332–352 (PLLLMGSIGMTITLGILSVVF) threads the bilayer. The Extracellular portion of the chain corresponds to 353–366 (GGATVVNGQPTLTG). Residues 367–387 (AAGIIALVTANLYVFSFGFSW) form a helical membrane-spanning segment. Residues 388–412 (GPIVWVLLGEMFNNKIRAAALSVAA) lie on the Cytoplasmic side of the membrane. A helical membrane pass occupies residues 413–433 (GVQWIANFIISTTFPPLLDTV). The Extracellular portion of the chain corresponds to 434 to 436 (GLG). The chain crosses the membrane as a helical span at residues 437 to 457 (PAYGLYATSAAISIFFIWFFV). Topologically, residues 458-468 (KETKGKTLEQM) are cytoplasmic.

The protein belongs to the major facilitator superfamily. Sugar transporter (TC 2.A.1.1) family.

It localises to the cell membrane. The protein is Glucose transport protein (gtr) of Synechocystis sp. (strain ATCC 27184 / PCC 6803 / Kazusa).